Here is a 471-residue protein sequence, read N- to C-terminus: MAREMTILGSAVLTLLLAGYLAQQYLPLPTPKVIGIDLGTTYCSVGVFFPGTGKVKVIPDENGHISIPSMVSFTDNDVYVGYESVELADSNPQNTIYDAKRFIGKIFTPEELEAEIGRYPFKVLNKNGMVEFSVTSNETITVSPEYVGSRLLLKLKEMAEAYLGMPVANAVISVPAEFDLKQRNSTIEAANLAGLKILRVINEPTAAAMAYGLHKADVFHVLVIDLGGGTLDVSLLNKQGGMFLTRAMSGNNKLGGQDFNQRLLQYLYKQIYQTYGFVPSRKEEIHRLRQSVEMVKLNLTLHQSAQLSALLTVEEQDRKEPHSSDTELPKDKLSSADDHRVNSGFGRGLSDKKSGESQVLFETEISRKLFDTLNEDLFQKILVPIQQVLKEGHLEKTEIDEVVLVGGSTRIPRIRQVIQEFFGKDPNTSVDPDLAVVTGVAIQAGIDGGSWPLQVSALEIPNKHLQKTNFN.

The N-terminal stretch at 1 to 22 is a signal peptide; sequence MAREMTILGSAVLTLLLAGYLA. The segment at 314–352 is disordered; sequence EEQDRKEPHSSDTELPKDKLSSADDHRVNSGFGRGLSDK. Basic and acidic residues predominate over residues 315 to 341; it reads EQDRKEPHSSDTELPKDKLSSADDHRV.

The protein belongs to the heat shock protein 70 family. As to quaternary structure, binds UBQLN2.

The protein resides in the microsome. It is found in the endoplasmic reticulum. Functionally, has peptide-independent ATPase activity. The protein is Heat shock 70 kDa protein 13 (HSPA13) of Pongo abelii (Sumatran orangutan).